The following is a 900-amino-acid chain: Phosphoenolpyruvate carboxylase (900 aa).

Residues H140 and K568 contribute to the active site.

The protein belongs to the PEPCase type 1 family. The cofactor is Mg(2+).

The catalysed reaction is oxaloacetate + phosphate = phosphoenolpyruvate + hydrogencarbonate. In terms of biological role, forms oxaloacetate, a four-carbon dicarboxylic acid source for the tricarboxylic acid cycle. This is Phosphoenolpyruvate carboxylase from Neisseria gonorrhoeae (strain ATCC 700825 / FA 1090).